Here is a 260-residue protein sequence, read N- to C-terminus: UPF0246 protein BURPS668_1321 (260 aa).

Belongs to the UPF0246 family.

The chain is UPF0246 protein BURPS668_1321 from Burkholderia pseudomallei (strain 668).